The primary structure comprises 199 residues: Transgelin-3 (199 aa).

Positions 24–136 constitute a Calponin-homology (CH) domain; the sequence is ADLENKLVDW…RTLMALGSVA (113 aa). S163 bears the Phosphoserine mark. The Calponin-like repeat unit spans residues 174 to 199; it reads IGLQMGSNKGASQAGMTGYGMPRQIM. The segment covering 178 to 188 has biased composition (polar residues); the sequence is MGSNKGASQAG. The interval 178–199 is disordered; it reads MGSNKGASQAGMTGYGMPRQIM.

The protein belongs to the calponin family.

The protein is Transgelin-3 (Tagln3) of Mus musculus (Mouse).